The chain runs to 357 residues: DnaJ homolog subfamily C member 25 (357 aa).

Residues 19–39 (WLLLAPLLLVPLLVRPAEALV) traverse the membrane as a helical segment. Residues 48–121 (DCYEVLGVSR…ETRKDYDYML (74 aa)) form the J domain. 2 consecutive transmembrane segments (helical) span residues 147-167 (VVILVSVCAISVFQYFSWWNS) and 241-261 (LLLFQVLLAPVHLCSYIAWYC).

It belongs to the DNAJC25 family.

The protein localises to the membrane. The protein is DnaJ homolog subfamily C member 25 (Dnajc25) of Rattus norvegicus (Rat).